The chain runs to 405 residues: Corticosteroid-binding globulin (405 aa).

An N-terminal signal peptide occupies residues 1–22 (MPLLLYTCLLWLSTSGLWTVQA). N-linked (GlcNAc...) asparagine glycosylation is found at asparagine 26, asparagine 31, asparagine 96, and asparagine 260. Asparagine 286 serves as a coordination point for cortisol. N-linked (GlcNAc...) asparagine glycosylation is found at asparagine 330 and asparagine 369. Tryptophan 393 contacts cortisol.

Belongs to the serpin family. As to expression, expressed by the liver; secreted in plasma.

Its subcellular location is the secreted. Its function is as follows. Major transport protein for glucocorticoids and progestins in the blood of almost all vertebrate species. This is Corticosteroid-binding globulin (SERPINA6) from Pongo abelii (Sumatran orangutan).